A 454-amino-acid polypeptide reads, in one-letter code: Venom prothrombin activator porpharin-D (454 aa).

The N-terminal stretch at 1–20 is a signal peptide; the sequence is MAPQLLLCLILTFLWSLPEA. Residues 21 to 40 constitute a propeptide that is removed on maturation; sequence ESNVFLKSKEANRFLQRTKR. The 46-residue stretch at 41 to 86 folds into the Gla domain; the sequence is SNSLFEEFRPGNIERECIEEKCSKEEAREIFKDNEKTEAFWNVYVD. 10 positions are modified to 4-carboxyglutamate: Glu-46, Glu-47, Glu-54, Glu-56, Glu-59, Glu-60, Glu-65, Glu-66, Glu-69, and Glu-75. Cys-57 and Cys-62 are joined by a disulfide. An EGF-like 1; calcium-binding domain is found at 86-122; the sequence is DGDQCSSNPCHYGGTCKDGIGSYTCTCLPNYEGKNCE. Disulfide bonds link Cys-90-Cys-101, Cys-95-Cys-110, Cys-112-Cys-121, Cys-129-Cys-140, Cys-136-Cys-149, Cys-151-Cys-164, Cys-172-Cys-316, Cys-216-Cys-221, Cys-236-Cys-252, Cys-364-Cys-378, and Cys-389-Cys-417. O-linked (Hex...) serine glycosylation is present at Ser-92. One can recognise an EGF-like 2 domain in the interval 129 to 164; sequence CRFFNGNCWHFCKPVQNDTQCSCAESYRLGDDGHSC. Positions 182–209 are cleaved as a propeptide — activation peptide; the sequence is REASLPDFVQSQNATLLKKSDNPSPDIR. Residues 210–441 enclose the Peptidase S1 domain; that stretch reads IINGMDCKLG…FIPWIKAVMR (232 aa). Active-site charge relay system residues include His-251 and Asp-296. Ser-393 functions as the Charge relay system in the catalytic mechanism.

It belongs to the peptidase S1 family. Snake venom subfamily. In terms of assembly, heterodimer of a light chain and a heavy chain; disulfide-linked. In terms of processing, the vitamin K-dependent, enzymatic carboxylation of some glutamate residues allows the modified protein to bind calcium. In terms of tissue distribution, expressed by the venom gland.

It is found in the secreted. The enzyme catalyses Selective cleavage of Arg-|-Thr and then Arg-|-Ile bonds in prothrombin to form thrombin.. In terms of biological role, snake prothrombin activator that attacks the hemostatic system of prey. This protein is functionally similar to blood coagulation factor Xa. This Pseudechis porphyriacus (Red-bellied black snake) protein is Venom prothrombin activator porpharin-D.